The primary structure comprises 138 residues: Small ribosomal subunit protein uS11c (138 aa).

Positions 1-24 (MAKPIPKVGSRRNGRSSARKSARR) are disordered. A compositionally biased stretch (basic residues) spans 9 to 24 (GSRRNGRSSARKSARR).

It belongs to the universal ribosomal protein uS11 family. Part of the 30S ribosomal subunit.

The protein resides in the plastid. Its subcellular location is the chloroplast. The polypeptide is Small ribosomal subunit protein uS11c (Gossypium hirsutum (Upland cotton)).